The primary structure comprises 734 residues: Ribosomal RNA large subunit methyltransferase K/L (734 aa).

The THUMP domain occupies 49-167 (HAYRICMWSR…KTEHTYCLDL (119 aa)).

Belongs to the methyltransferase superfamily. RlmKL family.

Its subcellular location is the cytoplasm. It carries out the reaction guanosine(2445) in 23S rRNA + S-adenosyl-L-methionine = N(2)-methylguanosine(2445) in 23S rRNA + S-adenosyl-L-homocysteine + H(+). The enzyme catalyses guanosine(2069) in 23S rRNA + S-adenosyl-L-methionine = N(2)-methylguanosine(2069) in 23S rRNA + S-adenosyl-L-homocysteine + H(+). Specifically methylates the guanine in position 2445 (m2G2445) and the guanine in position 2069 (m7G2069) of 23S rRNA. In Acinetobacter baumannii (strain SDF), this protein is Ribosomal RNA large subunit methyltransferase K/L.